We begin with the raw amino-acid sequence, 950 residues long: Double-stranded RNA-binding protein Staufen homolog (950 aa).

3 disordered regions span residues 25–168 (VSGA…QQQQ), 202–274 (QQQL…QPST), and 288–342 (VTPV…NTKE). Residues 31-43 (QQRSMMSQQRGGS) show a composition bias toward low complexity. Over residues 45–66 (AINSSKSPYQLQTSSISQFSHL) the composition is skewed to polar residues. The span at 67–77 (QQQQQQQQQQQ) shows a compositional bias: low complexity. Residues 78 to 122 (LVNNYHKQKQMSPDITSHQFSSSTGGGMPTQNGNYQSMSGSSIHT) show a composition bias toward polar residues. Composition is skewed to low complexity over residues 130-143 (QLSLQHQHHQYSSQ), 153-168 (QQHHYQSQQMTQQQQQ), and 202-253 (QQQL…ILQH). The span at 254 to 274 (SPTSGKSLSSAPHGTSVQPST) shows a compositional bias: polar residues. Residues 313 to 322 (SGRDSVHVSD) are compositionally biased toward basic and acidic residues. 4 DRBM domains span residues 344 to 411 (TPMC…ETKC), 435 to 546 (TPTV…ILKN), 578 to 645 (SEIS…ELRK), and 690 to 758 (NPIS…LLGY). Disordered stretches follow at residues 758–833 (YTKP…HTAS) and 922–950 (DIHPGGDGPQVKKDVLARSGSGMKKDFSK). Over residues 765 to 782 (PTKSSFKNPSTGEAGQTN) the composition is skewed to polar residues. Positions 922–937 (DIHPGGDGPQVKKDVL) are enriched in basic and acidic residues.

In terms of tissue distribution, strongly expressed in nervous tissue (at protein level).

Its subcellular location is the perikaryon. The protein resides in the cell projection. RNA-binding protein which is required for syntaxin location in sensory neurons during long-term synaptic facilitation. Binds to syntaxin mRNA and is required to maintain its accumulation at the axon hillock following neuronal stimulation and at the opposite pole in stable unstimulated sensory neurons. The polypeptide is Double-stranded RNA-binding protein Staufen homolog (Aplysia californica (California sea hare)).